The primary structure comprises 357 residues: Maleylacetate reductase 1 (357 aa).

It belongs to the iron-containing alcohol dehydrogenase family.

The catalysed reaction is 3-oxoadipate + NAD(+) = maleylacetate + NADH + H(+). The enzyme catalyses 3-oxoadipate + NADP(+) = maleylacetate + NADPH + H(+). The protein operates within aromatic compound metabolism; 3-chlorocatechol degradation. Its function is as follows. Plays a major role in the degradation of chloroaromatic compounds by channeling maleylacetate and some of its substituted derivatives into the 3-oxoadipate pathway. This enzyme converts maleylacetate and 2-chloromaleylacetate with similar efficiencies. This chain is Maleylacetate reductase 1 (macA), found in Rhodococcus opacus (Nocardia opaca).